A 473-amino-acid chain; its full sequence is Glutamine synthetase (473 aa).

Positions 18-102 constitute a GS beta-grasp domain; sequence NNIKWVDLQF…VLTKVFWGGG (85 aa). One can recognise a GS catalytic domain in the interval 110–473; that stretch reads PRGIAEEAEK…PMEIYQYLDS (364 aa). Mg(2+) is bound by residues Glu133 and Glu135. Glu207 serves as a coordination point for ATP. 2 residues coordinate Mg(2+): Glu212 and Glu220. L-glutamate-binding positions include 264–265 and Gly265; that span reads NG. His269 is a Mg(2+) binding site. ATP is bound by residues 271–273 and Ser273; that span reads HFS. Arg324, Glu330, and Arg342 together coordinate L-glutamate. Residues Arg342, Arg347, and Lys357 each contribute to the ATP site. Glu362 serves as a coordination point for Mg(2+). Arg364 contacts L-glutamate.

Belongs to the glutamine synthetase family. As to quaternary structure, oligomer of 12 subunits arranged in the form of two hexagons. Mg(2+) serves as cofactor. It depends on Mn(2+) as a cofactor.

The protein resides in the cytoplasm. The enzyme catalyses L-glutamate + NH4(+) + ATP = L-glutamine + ADP + phosphate + H(+). Strongly inhibited by glycine and L-alanine. AMP at 10 mM displays a very weak inhibitory effect. The activity of this enzyme is not controlled by adenylation. Its function is as follows. Probably involved in nitrogen metabolism via ammonium assimilation. Catalyzes the ATP-dependent biosynthesis of glutamine from glutamate and ammonia. In Sulfolobus acidocaldarius (strain ATCC 33909 / DSM 639 / JCM 8929 / NBRC 15157 / NCIMB 11770), this protein is Glutamine synthetase.